The primary structure comprises 234 residues: Uridylate kinase (234 aa).

ATP contacts are provided by residues Lys8 to Gly11, Gly51, and Arg55. Residues Asp68 and Thr129–Thr136 contribute to the UMP site. Residues Thr156, Tyr162, and Asp165 each contribute to the ATP site.

Belongs to the UMP kinase family. In terms of assembly, homohexamer.

It is found in the cytoplasm. The enzyme catalyses UMP + ATP = UDP + ADP. The protein operates within pyrimidine metabolism; CTP biosynthesis via de novo pathway; UDP from UMP (UMPK route): step 1/1. Its activity is regulated as follows. Inhibited by UTP. Its function is as follows. Catalyzes the reversible phosphorylation of UMP to UDP. This chain is Uridylate kinase, found in Fervidobacterium nodosum (strain ATCC 35602 / DSM 5306 / Rt17-B1).